Here is a 293-residue protein sequence, read N- to C-terminus: Ribosomal protein L11 methyltransferase (293 aa).

S-adenosyl-L-methionine contacts are provided by threonine 145, glycine 166, aspartate 188, and asparagine 230.

The protein belongs to the methyltransferase superfamily. PrmA family.

It is found in the cytoplasm. It carries out the reaction L-lysyl-[protein] + 3 S-adenosyl-L-methionine = N(6),N(6),N(6)-trimethyl-L-lysyl-[protein] + 3 S-adenosyl-L-homocysteine + 3 H(+). Methylates ribosomal protein L11. The polypeptide is Ribosomal protein L11 methyltransferase (Shewanella baltica (strain OS185)).